The primary structure comprises 145 residues: Large ribosomal subunit protein uL15 (145 aa).

Positions 1–30 (MAHSLRKTRKLRGHVSHGHGRIGKHRKHPG) are enriched in basic residues. The disordered stretch occupies residues 1–48 (MAHSLRKTRKLRGHVSHGHGRIGKHRKHPGGRGNAGGQHHHRINRDKY).

The protein belongs to the universal ribosomal protein uL15 family. In terms of assembly, component of the large ribosomal subunit.

Its subcellular location is the cytoplasm. It localises to the cytosol. It is found in the rough endoplasmic reticulum. Component of the large ribosomal subunit. In Oscheius tipulae, this protein is Large ribosomal subunit protein uL15 (rpl-27a).